A 294-amino-acid polypeptide reads, in one-letter code: HTH-type transcriptional regulator ClcR (294 aa).

One can recognise an HTH lysR-type domain in the interval 1–58 (MEFRQLRYFIAVAEEGNIGAAARRLHISQPPITRQIQALEQDLGVVLFERTHRGVELT). Positions 18–37 (IGAAARRLHISQPPITRQIQ) form a DNA-binding region, H-T-H motif.

The protein belongs to the LysR transcriptional regulatory family.

It is found in the cytoplasm. Involved in regulation of chlorinated catechol metabolism. Transcriptional activator of the clcABD chlorocatechol oxidative operon. The polypeptide is HTH-type transcriptional regulator ClcR (clcR) (Pseudomonas putida (Arthrobacter siderocapsulatus)).